A 396-amino-acid chain; its full sequence is Elongation factor Tu (396 aa).

Residues K10–V206 enclose the tr-type G domain. The tract at residues G19–T26 is G1. G19–T26 is a binding site for GTP. T26 provides a ligand contact to Mg(2+). The G2 stretch occupies residues G60 to S64. Residues D81–G84 are G3. GTP is bound by residues D81–H85 and N136–D139. The G4 stretch occupies residues N136–D139. The interval S174–L176 is G5.

Belongs to the TRAFAC class translation factor GTPase superfamily. Classic translation factor GTPase family. EF-Tu/EF-1A subfamily. As to quaternary structure, monomer.

The protein localises to the cytoplasm. The enzyme catalyses GTP + H2O = GDP + phosphate + H(+). GTP hydrolase that promotes the GTP-dependent binding of aminoacyl-tRNA to the A-site of ribosomes during protein biosynthesis. In Legionella pneumophila (strain Paris), this protein is Elongation factor Tu.